A 260-amino-acid polypeptide reads, in one-letter code: 3'-5' ssDNA/RNA exonuclease TatD (260 aa).

A divalent metal cation is bound by residues Glu92, His128, and His153.

This sequence belongs to the metallo-dependent hydrolases superfamily. TatD-type hydrolase family. TatD subfamily. In terms of assembly, monomer. The cofactor is Mg(2+).

The protein resides in the cytoplasm. In terms of biological role, 3'-5' exonuclease that prefers single-stranded DNA and RNA. May play a role in the H(2)O(2)-induced DNA damage repair. The sequence is that of 3'-5' ssDNA/RNA exonuclease TatD from Pantoea ananatis (strain LMG 20103).